The following is a 481-amino-acid chain: Chromosomal replication initiator protein DnaA (481 aa).

A domain I, interacts with DnaA modulators region spans residues methionine 1–arginine 71. The segment at arginine 71 to threonine 143 is domain II. Low complexity predominate over residues alanine 86–serine 96. The segment at alanine 86 to threonine 110 is disordered. Positions arginine 144 to serine 361 are domain III, AAA+ region. Positions 189, 191, 192, and 193 each coordinate ATP. The tract at residues arginine 362 to asparagine 481 is domain IV, binds dsDNA.

It belongs to the DnaA family. Oligomerizes as a right-handed, spiral filament on DNA at oriC.

The protein localises to the cytoplasm. In terms of biological role, plays an essential role in the initiation and regulation of chromosomal replication. ATP-DnaA binds to the origin of replication (oriC) to initiate formation of the DNA replication initiation complex once per cell cycle. Binds the DnaA box (a 9 base pair repeat at the origin) and separates the double-stranded (ds)DNA. Forms a right-handed helical filament on oriC DNA; dsDNA binds to the exterior of the filament while single-stranded (ss)DNA is stabiized in the filament's interior. The ATP-DnaA-oriC complex binds and stabilizes one strand of the AT-rich DNA unwinding element (DUE), permitting loading of DNA polymerase. After initiation quickly degrades to an ADP-DnaA complex that is not apt for DNA replication. Binds acidic phospholipids. This Laribacter hongkongensis (strain HLHK9) protein is Chromosomal replication initiator protein DnaA.